A 167-amino-acid polypeptide reads, in one-letter code: Iron-sulfur cluster assembly protein 1 (167 aa).

The N-terminal 50 residues, 1–50 (MMLKQAAKKALGLTSRQSTPWSVGILRTYHENVIDHYDNPRNVGSFDKND), are a transit peptide targeting the mitochondrion.

Belongs to the NifU family. Component of the core Fe-S cluster (ISC) assembly machinery. Interacts with HSCB. The cofactor is [2Fe-2S] cluster. In terms of tissue distribution, expressed in roots, stems, leaves, flowers, pollen and siliques.

The protein resides in the mitochondrion matrix. Its subcellular location is the cytoplasm. The protein localises to the cytosol. It functions in the pathway cofactor biosynthesis; iron-sulfur cluster biosynthesis. In terms of biological role, scaffold protein for the de novo synthesis of iron-sulfur (Fe-S) clusters within mitochondria, which is required for maturation of both mitochondrial and cytoplasmic [2Fe-2S] and [4Fe-4S] proteins. First, a [2Fe-2S] cluster is transiently assembled on the scaffold protein ISCU (ISU1, ISU2 or ISU3). In a second step, the cluster is released from ISCU, transferred to a glutaredoxin, followed by the formation of mitochondrial [2Fe-2S] proteins, the synthesis of [4Fe-4S] clusters and their target-specific insertion into the recipient apoproteins. Cluster assembly on ISCU depends on the function of the cysteine desulfurase complex NFS1-ISD11, which serves as the sulfur donor for cluster synthesis, the iron-binding protein frataxin as the putative iron donor, and the electron transfer chain comprised of ferredoxin reductase and ferredoxin, which receive their electrons from NADH. This Arabidopsis thaliana (Mouse-ear cress) protein is Iron-sulfur cluster assembly protein 1 (ISU1).